A 447-amino-acid polypeptide reads, in one-letter code: N-succinylarginine dihydrolase (447 aa).

Substrate-binding positions include 19–28 (AGLSFGNEAS), asparagine 110, and 137–138 (HR). Residue glutamate 174 is part of the active site. Residue arginine 212 coordinates substrate. The active site involves histidine 248. Residues aspartate 250 and asparagine 359 each coordinate substrate. Cysteine 365 acts as the Nucleophile in catalysis.

It belongs to the succinylarginine dihydrolase family. In terms of assembly, homodimer.

It catalyses the reaction N(2)-succinyl-L-arginine + 2 H2O + 2 H(+) = N(2)-succinyl-L-ornithine + 2 NH4(+) + CO2. Its pathway is amino-acid degradation; L-arginine degradation via AST pathway; L-glutamate and succinate from L-arginine: step 2/5. Its function is as follows. Catalyzes the hydrolysis of N(2)-succinylarginine into N(2)-succinylornithine, ammonia and CO(2). The sequence is that of N-succinylarginine dihydrolase from Salmonella dublin (strain CT_02021853).